Reading from the N-terminus, the 436-residue chain is MIKSIKGFNDILQVETATSRPSSEWRQLEAMLKQALDQFGYEEIRLPIVEETQLFARAIGDATDIVEKEMFSFTDKSDPPTPITLRPEGTAGAVRAVIEHNLLRGDSPKLWYMGPMFRYEQPQKGRYRQFHQLGVEAFGSEHVDVEAELIAMTYLMWQRLGIDHELSLEINSLGELDERKAYRSALVEFLQTKKEQLDEDSQRRLTTNPLRILDSKDPNTQALLMEAPRLADFLGEDSQAHFEQLKTYLTALGIEYVVNPNLVRGLDYYNKTVFEWVTDKLGSQATVCAGGRYDGLIGQLKSIGKSEDKAKAVKSEPAVGFAMGLERLLLLVQAVNPIQAQPACDVFVVVHPDLYQQGLLYAQSLRQARSDLRVKMASASSLKAQMKKADKSGAQLTVILAQDEVESGTISVKTMHTGEQVSQDKLWLHSAENFRL.

This sequence belongs to the class-II aminoacyl-tRNA synthetase family. Homodimer.

The protein localises to the cytoplasm. It carries out the reaction tRNA(His) + L-histidine + ATP = L-histidyl-tRNA(His) + AMP + diphosphate + H(+). The protein is Histidine--tRNA ligase of Psychrobacter sp. (strain PRwf-1).